The chain runs to 750 residues: Glutathione biosynthesis bifunctional protein GshAB (750 aa).

The interval 1–333 (MIIDRLLQRS…EANRLNDLIA (333 aa)) is glutamate--cysteine ligase. A disordered region spans residues 32–51 (QPTQRVAQTPHPKTLGSRNY). The region spanning 489-747 (KKILDEKHFP…ITPRILAKLF (259 aa)) is the ATP-grasp domain. 516 to 574 (SQIQDKPIVVKPKSTNFGLGISIFKTSANLASYEKAIDIAFTEDSAILVEEYIEGTEYR) lines the ATP pocket. Residues aspartate 696, glutamate 717, and asparagine 719 each contribute to the Mg(2+) site. Mn(2+) is bound by residues aspartate 696, glutamate 717, and asparagine 719.

It in the N-terminal section; belongs to the glutamate--cysteine ligase type 1 family. Type 2 subfamily. Monomer. It depends on Mg(2+) as a cofactor. Requires Mn(2+) as cofactor.

The catalysed reaction is L-cysteine + L-glutamate + ATP = gamma-L-glutamyl-L-cysteine + ADP + phosphate + H(+). The enzyme catalyses gamma-L-glutamyl-L-cysteine + glycine + ATP = glutathione + ADP + phosphate + H(+). Its pathway is sulfur metabolism; glutathione biosynthesis; glutathione from L-cysteine and L-glutamate: step 1/2. It functions in the pathway sulfur metabolism; glutathione biosynthesis; glutathione from L-cysteine and L-glutamate: step 2/2. In terms of biological role, synthesizes glutathione from L-glutamate and L-cysteine via gamma-L-glutamyl-L-cysteine. This Streptococcus agalactiae serotype III (strain NEM316) protein is Glutathione biosynthesis bifunctional protein GshAB.